Here is a 760-residue protein sequence, read N- to C-terminus: Xaa-Pro dipeptidyl-peptidase (760 aa).

Active-site charge relay system residues include S349, D469, and H499.

Belongs to the peptidase S15 family. As to quaternary structure, homodimer.

It localises to the cytoplasm. It catalyses the reaction Hydrolyzes Xaa-Pro-|- bonds to release unblocked, N-terminal dipeptides from substrates including Ala-Pro-|-p-nitroanilide and (sequentially) Tyr-Pro-|-Phe-Pro-|-Gly-Pro-|-Ile.. Its function is as follows. Removes N-terminal dipeptides sequentially from polypeptides having unsubstituted N-termini provided that the penultimate residue is proline. In Streptococcus pyogenes serotype M3 (strain ATCC BAA-595 / MGAS315), this protein is Xaa-Pro dipeptidyl-peptidase.